The primary structure comprises 543 residues: Chaperonin GroEL (543 aa).

ATP is bound by residues 29–32 (TLGP), 86–90 (DGTTT), G413, 476–478 (NAA), and D492.

It belongs to the chaperonin (HSP60) family. As to quaternary structure, forms a cylinder of 14 subunits composed of two heptameric rings stacked back-to-back. Interacts with the co-chaperonin GroES.

It localises to the cytoplasm. The catalysed reaction is ATP + H2O + a folded polypeptide = ADP + phosphate + an unfolded polypeptide.. Functionally, together with its co-chaperonin GroES, plays an essential role in assisting protein folding. The GroEL-GroES system forms a nano-cage that allows encapsulation of the non-native substrate proteins and provides a physical environment optimized to promote and accelerate protein folding. This chain is Chaperonin GroEL, found in Streptococcus pyogenes serotype M49 (strain NZ131).